The primary structure comprises 138 residues: Ribosome-binding factor A (138 aa).

This sequence belongs to the RbfA family. Monomer. Binds 30S ribosomal subunits, but not 50S ribosomal subunits or 70S ribosomes.

The protein localises to the cytoplasm. One of several proteins that assist in the late maturation steps of the functional core of the 30S ribosomal subunit. Associates with free 30S ribosomal subunits (but not with 30S subunits that are part of 70S ribosomes or polysomes). Required for efficient processing of 16S rRNA. May interact with the 5'-terminal helix region of 16S rRNA. This is Ribosome-binding factor A from Bradyrhizobium sp. (strain BTAi1 / ATCC BAA-1182).